The following is a 241-amino-acid chain: RecQ-mediated genome instability protein 1 (241 aa).

The protein belongs to the RMI1 family. Forms a complex with SGS1 and TOP3.

It localises to the cytoplasm. Its subcellular location is the nucleus. Functionally, structure-specific DNA-binding protein with a preference for cruciform structures. Also binds single-stranded DNA (ssDNA). Functions together with SGS1 and TOP3 to maintain genome integrity. Essential for proper meiotic cell division. Required for normal S-phase progression and DNA damage response. Required for resistance to the DNA-damaging agent methyl methanesulfonate (MMS). This Saccharomyces cerevisiae (strain ATCC 204508 / S288c) (Baker's yeast) protein is RecQ-mediated genome instability protein 1.